Here is a 563-residue protein sequence, read N- to C-terminus: GTPase Obg (563 aa).

The Obg domain occupies 2–168 (SDFVDRVTVH…RDVILELKSI (167 aa)). The 181-residue stretch at 169-349 (ADVALVGFPS…LNFALSALVH (181 aa)) folds into the OBG-type G domain. Residues 175–182 (GFPSAGKS), 200–204 (FTTLV), 221–224 (DVPG), 301–304 (NKID), and 330–332 (STA) each bind GTP. Residues Ser182 and Thr202 each coordinate Mg(2+). An OCT domain is found at 383–469 (DEGGSALEFT…ARMVEFDWDP (87 aa)). The interval 529 to 563 (RKAGHWADPTVDDDRHDETSLFGHGESSEDGETEE) is disordered.

The protein belongs to the TRAFAC class OBG-HflX-like GTPase superfamily. OBG GTPase family. In terms of assembly, monomer. Mg(2+) serves as cofactor.

The protein resides in the cytoplasm. In terms of biological role, an essential GTPase which binds GTP, GDP and possibly (p)ppGpp with moderate affinity, with high nucleotide exchange rates and a fairly low GTP hydrolysis rate. Plays a role in control of the cell cycle, stress response, ribosome biogenesis and in those bacteria that undergo differentiation, in morphogenesis control. In Bifidobacterium longum (strain NCC 2705), this protein is GTPase Obg.